The primary structure comprises 418 residues: Tyrosine--tRNA ligase (418 aa).

Residue Y34 participates in L-tyrosine binding. The 'HIGH' region motif lies at 39–48 (PTADSLHLGH). Residues Y169 and Q173 each coordinate L-tyrosine. The 'KMSKS' region signature appears at 229-233 (KFGKS). ATP is bound at residue K232. An S4 RNA-binding domain is found at 352–418 (HNIVEILVAA…GKKKYAVLTY (67 aa)).

The protein belongs to the class-I aminoacyl-tRNA synthetase family. TyrS type 1 subfamily. In terms of assembly, homodimer.

The protein localises to the cytoplasm. The enzyme catalyses tRNA(Tyr) + L-tyrosine + ATP = L-tyrosyl-tRNA(Tyr) + AMP + diphosphate + H(+). Functionally, catalyzes the attachment of tyrosine to tRNA(Tyr) in a two-step reaction: tyrosine is first activated by ATP to form Tyr-AMP and then transferred to the acceptor end of tRNA(Tyr). This is Tyrosine--tRNA ligase from Streptococcus pyogenes serotype M1.